A 54-amino-acid polypeptide reads, in one-letter code: uncharacterized protein (54 aa).

This is an uncharacterized protein from Dictyostelium discoideum (Social amoeba).